A 366-amino-acid chain; its full sequence is L-tyrosine C(3)-methyltransferase (366 aa).

The segment covering 1–12 has biased composition (polar residues); it reads MTISLENTTVGQ. The disordered stretch occupies residues 1 to 22; sequence MTISLENTTVGQNPAGGPPTGK. Glu223 is an S-adenosyl-L-methionine binding site.

This sequence belongs to the class I-like SAM-binding methyltransferase superfamily. Cation-independent O-methyltransferase family.

The catalysed reaction is L-tyrosine + S-adenosyl-L-methionine = 3-methyl-L-tyrosine + S-adenosyl-L-homocysteine + H(+). Its pathway is antibiotic biosynthesis. C-methyltransferase that mediates the methylation of tyrosine into 3-methyl-L-tyrosine (3-Me-Tyr) in biosynthesis of saframycin A, a potent antitumor antibiotic that belongs to the tetrahydroisoquinoline family. Involved in biosynthesis of 3-hydroxy-5-methyl-O-methyltyrosine (3-OH-5-Me-OMe-Tyr), a core structure of saframycin A. This Streptomyces lavendulae protein is L-tyrosine C(3)-methyltransferase.